The chain runs to 168 residues: ATP synthase subunit b (168 aa).

The helical transmembrane segment at 11–31 (EISIINTLWYLIVFSILLLAV) threads the bilayer.

The protein belongs to the ATPase B chain family. F-type ATPases have 2 components, F(1) - the catalytic core - and F(0) - the membrane proton channel. F(1) has five subunits: alpha(3), beta(3), gamma(1), delta(1), epsilon(1). F(0) has three main subunits: a(1), b(2) and c(10-14). The alpha and beta chains form an alternating ring which encloses part of the gamma chain. F(1) is attached to F(0) by a central stalk formed by the gamma and epsilon chains, while a peripheral stalk is formed by the delta and b chains.

The protein localises to the cell membrane. In terms of biological role, f(1)F(0) ATP synthase produces ATP from ADP in the presence of a proton or sodium gradient. F-type ATPases consist of two structural domains, F(1) containing the extramembraneous catalytic core and F(0) containing the membrane proton channel, linked together by a central stalk and a peripheral stalk. During catalysis, ATP synthesis in the catalytic domain of F(1) is coupled via a rotary mechanism of the central stalk subunits to proton translocation. Its function is as follows. Component of the F(0) channel, it forms part of the peripheral stalk, linking F(1) to F(0). This Lactobacillus delbrueckii subsp. bulgaricus (strain ATCC 11842 / DSM 20081 / BCRC 10696 / JCM 1002 / NBRC 13953 / NCIMB 11778 / NCTC 12712 / WDCM 00102 / Lb 14) protein is ATP synthase subunit b.